An 893-amino-acid chain; its full sequence is Protein bride of sevenless (893 aa).

Positions 1-30 (MSGLQLIWKSPTQLVLFVLLITISCIDLCH) are cleaved as a signal peptide. The Extracellular portion of the chain corresponds to 32-530 (VGAATPTKKS…RIKLDTWVAT (499 aa)). Disordered stretches follow at residues 36 to 66 (TPTKKSPPVRITKPQPVSSTTTAIPTTNEGS) and 82 to 102 (GTASSASSSSNGGSDDSSSTT). Polar residues predominate over residues 50-66 (QPVSSTTTAIPTTNEGS). N-linked (GlcNAc...) asparagine glycans are attached at residues N183, N307, N328, N471, and N482. 8 consecutive transmembrane segments (helical) span residues 531–551 (GLTAAILGLIATLAILVFIVV), 563–583 (PVTSILLLLSLILVFCSFVPF), 607–627 (LCGVRVFIMTLVYCFVFSLLL), 630–650 (AVMLASIGSEGGFLSHVNGYI), 653–673 (IICVLSVFVQVGMSVQLLVVM), 692–712 (WGLLAYDFLLLCSLVSLVPFI), 722–742 (GILIVIGAVLILIIWSVWIAL), and 752–772 (AAIPLGMQASGWAVLVGILIP). Residues 773–893 (RTFLIVRGIE…SPDHSKITRF (121 aa)) lie on the Cytoplasmic side of the membrane. Positions 858–893 (ANINPQRPPPHPQQSPSRSSVCSLPPSPDHSKITRF) are disordered.

The protein belongs to the G-protein coupled receptor 3 family.

It is found in the cell membrane. Acts as a ligand for sevenless tyrosine-kinase receptor during eye development. This is Protein bride of sevenless (boss) from Drosophila virilis (Fruit fly).